A 155-amino-acid polypeptide reads, in one-letter code: Transcription antitermination protein NusB (155 aa).

Belongs to the NusB family.

Its function is as follows. Involved in transcription antitermination. Required for transcription of ribosomal RNA (rRNA) genes. Binds specifically to the boxA antiterminator sequence of the ribosomal RNA (rrn) operons. The polypeptide is Transcription antitermination protein NusB (Halorhodospira halophila (strain DSM 244 / SL1) (Ectothiorhodospira halophila (strain DSM 244 / SL1))).